The primary structure comprises 176 residues: Cytidylate kinase (176 aa).

7–15 contacts ATP; that stretch reads GPPGSGTTS.

Belongs to the cytidylate kinase family. Type 2 subfamily.

It is found in the cytoplasm. The enzyme catalyses CMP + ATP = CDP + ADP. It carries out the reaction dCMP + ATP = dCDP + ADP. The protein is Cytidylate kinase of Methanosphaerula palustris (strain ATCC BAA-1556 / DSM 19958 / E1-9c).